The following is a 1568-amino-acid chain: Myosin-2 (1568 aa).

The Myosin N-terminal SH3-like domain maps to 4-57 (EVGTRCWYPHKELGWIGAEVIKNEVKDGKYHLELSLEDDEVVSVDTEDLNDDKN). Residues 70-783 (EATEDLTSLS…MLAYLEKLRS (714 aa)) enclose the Myosin motor domain. 164–171 (GESGAGKT) contacts ATP. The interval 443 to 523 (FIGVLDIYGF…LGILSLLDEE (81 aa)) is actin-binding. A disordered region spans residues 619–641 (KKAELEQNNPGNKKPGPARTVNR). IQ domains lie at 786 to 808 (MHNS…QYLK), 809 to 833 (ISQA…YHEM), 834 to 856 (KVHS…NVFN), 857 to 881 (VLIT…KREH), 882 to 904 (EYNA…TFLN), and 905 to 934 (TKRD…DAKS). Residues 944-1088 (KLENKVIELT…ISRLQTAMSL (145 aa)) adopt a coiled-coil conformation. The interval 1089–1568 (GTVTTSVLPQ…VAQQVVQDGH (480 aa)) is non alpha-helical, tail domain. In terms of domain architecture, Dilute spans 1223–1498 (AQVLTTIQKV…LRYVADIVKK (276 aa)).

It belongs to the TRAFAC class myosin-kinesin ATPase superfamily. Myosin family. Homodimer. Interacts with calmodulin (CMD1) and the myosin light chain MLC1 through its IQ repeats.

Myosin heavy chain that is required for the cell cycle-regulated transport of various organelles and proteins for their segregation. Functions by binding with its tail domain to receptor proteins on organelles and exerting force with its N-terminal motor domain against actin filaments, thereby transporting its cargo along polarized actin cables. The polypeptide is Myosin-2 (MYO2) (Saccharomyces uvarum (strain ATCC 76518 / CBS 7001 / CLIB 283 / NBRC 10550 / MCYC 623 / NCYC 2669 / NRRL Y-11845) (Yeast)).